Here is a 364-residue protein sequence, read N- to C-terminus: Dual-specificity RNA methyltransferase RlmN (364 aa).

The active-site Proton acceptor is Glu-91. The region spanning Glu-97 to Asp-333 is the Radical SAM core domain. An intrachain disulfide couples Cys-104 to Cys-338. [4Fe-4S] cluster-binding residues include Cys-111, Cys-115, and Cys-118. S-adenosyl-L-methionine is bound by residues Gly-164–Glu-165, Ser-196, Ser-218–His-220, and Asn-295. Residue Cys-338 is the S-methylcysteine intermediate of the active site.

This sequence belongs to the radical SAM superfamily. RlmN family. [4Fe-4S] cluster serves as cofactor.

The protein localises to the cytoplasm. It carries out the reaction adenosine(2503) in 23S rRNA + 2 reduced [2Fe-2S]-[ferredoxin] + 2 S-adenosyl-L-methionine = 2-methyladenosine(2503) in 23S rRNA + 5'-deoxyadenosine + L-methionine + 2 oxidized [2Fe-2S]-[ferredoxin] + S-adenosyl-L-homocysteine. The enzyme catalyses adenosine(37) in tRNA + 2 reduced [2Fe-2S]-[ferredoxin] + 2 S-adenosyl-L-methionine = 2-methyladenosine(37) in tRNA + 5'-deoxyadenosine + L-methionine + 2 oxidized [2Fe-2S]-[ferredoxin] + S-adenosyl-L-homocysteine. In terms of biological role, specifically methylates position 2 of adenine 2503 in 23S rRNA and position 2 of adenine 37 in tRNAs. m2A2503 modification seems to play a crucial role in the proofreading step occurring at the peptidyl transferase center and thus would serve to optimize ribosomal fidelity. The protein is Dual-specificity RNA methyltransferase RlmN of Chromobacterium violaceum (strain ATCC 12472 / DSM 30191 / JCM 1249 / CCUG 213 / NBRC 12614 / NCIMB 9131 / NCTC 9757 / MK).